A 315-amino-acid chain; its full sequence is Annexin Gh1 (315 aa).

4 Annexin repeats span residues 10–81 (PSVS…LWAL), 82–153 (DPAE…PLVS), 165–236 (TLAK…STVK), and 240–311 (YPEK…VLAG). Residues Phe23, Gly25, Gly27, and Glu67 each contribute to the Ca(2+) site. 7 residues coordinate Ca(2+): Ile253, Arg255, Gly257, Val295, Asp297, Thr298, and Glu303.

Belongs to the annexin family. Monomer. Trimer. Oligomerization is calcium-independent. Disassembly of the oligomers seems to be required for calcium-binding.

It is found in the membrane. Binds to phospholipid vesicles in a calcium-dependent manner in vitro. Prefers phosphatidyl-serine containing membranes. May have a role in the membrane cytoskeleton scaffolding or exocytotic processes. May be involved in oxidative stress response. The sequence is that of Annexin Gh1 from Gossypium hirsutum (Upland cotton).